The chain runs to 99 residues: Essential MCU regulator, mitochondrial (99 aa).

Residues 1-39 (MAARVGVLSVAGFRAAARAGGLLRASKQSSAVSHVPCRT) constitute a mitochondrion transit peptide. Topologically, residues 40–57 (AIATSAGTVLPKPEKVSF) are mitochondrial matrix. A helical transmembrane segment spans residues 58–77 (GLLRVFTVVIPFLYIGTLIS). The Mitochondrial intermembrane segment spans residues 78–99 (KNFAALLEEHDIFVPEDDDDDD).

The protein belongs to the SMDT1/EMRE family. Component of the uniplex complex.

The protein localises to the mitochondrion inner membrane. Functionally, essential regulatory subunit of the mitochondrial calcium uniporter complex (uniplex), a complex that mediates calcium uptake into mitochondria. Required to bridge the calcium-sensing proteins micu1 with the calcium-conducting subunit mcu. Acts by mediating activation of mcu and retention of micu1 to the mcu pore, in order to ensure tight regulation of the uniplex complex and appropriate responses to intracellular calcium signaling. The sequence is that of Essential MCU regulator, mitochondrial from Xenopus tropicalis (Western clawed frog).